The sequence spans 40 residues: Metallothionein-1 (40 aa).

Belongs to the metallothionein superfamily. Type 5 family.

This protein binds cations of several transition elements. It is thought to be involved in detoxification processes. The chain is Metallothionein-1 (MtnA) from Drosophila melanogaster (Fruit fly).